The following is a 733-amino-acid chain: Serine/threonine-protein kinase ATG1c (733 aa).

Positions tyrosine 12–leucine 269 constitute a Protein kinase domain. ATP contacts are provided by residues isoleucine 18–valine 26 and lysine 41. Catalysis depends on aspartate 134, which acts as the Proton acceptor. Disordered stretches follow at residues serine 292–serine 363 and phenylalanine 379–serine 414. Residues lysine 329–glycine 339 show a composition bias toward polar residues. Basic and acidic residues-rich tracts occupy residues valine 342–glutamate 360 and phenylalanine 379–proline 393. The AIM (Atg8-family-interacting motif) motif lies at phenylalanine 419–valine 422. 2 disordered regions span residues glycine 565–glycine 596 and histidine 713–serine 733. Over residues serine 566–serine 577 the composition is skewed to polar residues. The span at leucine 579–glycine 596 shows a compositional bias: basic and acidic residues. Residues serine 717–serine 733 show a composition bias toward polar residues.

This sequence belongs to the protein kinase superfamily. Ser/Thr protein kinase family.

Its subcellular location is the cytoplasmic vesicle. The protein resides in the autophagosome. Its function is as follows. Serine/threonine protein kinase involved in autophagy. The ATG1-ATG13 protein kinase complex regulates downstream events required for autophagosome enclosure and/or vacuolar delivery. The polypeptide is Serine/threonine-protein kinase ATG1c (Arabidopsis thaliana (Mouse-ear cress)).